The chain runs to 284 residues: Deoxyribonuclease-1 (284 aa).

The first 22 residues, 1–22, serve as a signal peptide directing secretion; it reads MRYTGLMGILLTLVNLLQLAAT. N-linked (GlcNAc...) asparagine glycosylation occurs at Asn40. Glu100 is a catalytic residue. The cysteines at positions 123 and 126 are disulfide-linked. An N-linked (GlcNAc...) asparagine glycan is attached at Asn128. His156 is an active-site residue. The cysteines at positions 195 and 231 are disulfide-linked.

This sequence belongs to the DNase I family. Requires Ca(2+) as cofactor. It depends on Mg(2+) as a cofactor.

It localises to the secreted. It is found in the zymogen granule. Its subcellular location is the nucleus envelope. The enzyme catalyses Endonucleolytic cleavage to 5'-phosphodinucleotide and 5'-phosphooligonucleotide end-products.. Functionally, serum endocuclease secreted into body fluids by a wide variety of exocrine and endocrine organs. Expressed by non-hematopoietic tissues and preferentially cleaves protein-free DNA. Among other functions, seems to be involved in cell death by apoptosis. Binds specifically to G-actin and blocks actin polymerization. Together with DNASE1L3, plays a key role in degrading neutrophil extracellular traps (NETs). NETs are mainly composed of DNA fibers and are released by neutrophils to bind pathogens during inflammation. Degradation of intravascular NETs by DNASE1 and DNASE1L3 is required to prevent formation of clots that obstruct blood vessels and cause organ damage following inflammation. The chain is Deoxyribonuclease-1 (Dnase1) from Rattus norvegicus (Rat).